Here is a 1894-residue protein sequence, read N- to C-terminus: Fibronectin type III domain-containing protein 1 (1894 aa).

The signal sequence occupies residues 1–32 (MAPEAGATLRAPRRLSWAALLLLAALLPVASS). In terms of domain architecture, Fibronectin type-III 1 spans 39 to 131 (HPLKPRHVKL…PVYRAESPPG (93 aa)). A glycan (N-linked (GlcNAc...) asparagine) is linked at Asn-149. 3 consecutive Fibronectin type-III domains span residues 158–258 (PNKP…SEED), 262–357 (VPDD…TPES), and 362–457 (APEN…MPTT). Disordered regions lie at residues 455–500 (PTTS…PQGR), 515–1271 (ANGG…TVSP), 1311–1350 (LSRQ…IING), and 1444–1515 (THPP…CPPG). Residues 565–574 (TLRPPSRHGH) show a composition bias toward basic residues. A compositionally biased stretch (low complexity) spans 614–625 (PSASASPAHHAS). The span at 626-641 (TQGTSHRPSLPASLND) shows a compositional bias: polar residues. Composition is skewed to low complexity over residues 711–722 (SASAPPSRLSPP) and 759–778 (SRST…TQVS). Ser-717 carries the phosphoserine modification. Positions 786 to 799 (GESHGDGDREDGGR) are enriched in basic and acidic residues. Composition is skewed to polar residues over residues 941–957 (KYSS…QSTD) and 1027–1060 (SPSQ…TASS). Residues 1071–1088 (QDEDAQGSYDDDSTEVEA) show a composition bias toward acidic residues. Residues 1166 to 1176 (PLSSKSQQSVS) show a composition bias toward polar residues. The span at 1197–1209 (SSSVPKWPSSSTP) shows a compositional bias: low complexity. Residues 1211–1226 (GGKDADGSLAKEEREP) show a composition bias toward basic and acidic residues. Low complexity predominate over residues 1445–1504 (HPPTTTMQPTTTTTPLPTTTTPRPTTATTRRTTTTRRTTTRRPTTTVRTTTRTTTTTTPT). The 95-residue stretch at 1658–1752 (APRNITVVAV…PSVSFVTESD (95 aa)) folds into the Fibronectin type-III 5 domain. Asn-1661 carries an N-linked (GlcNAc...) asparagine glycan.

Almost absent from healthy skin; especially in epidermal keratinocytes, skin fibroblasts or endothelial cells and is barely detectable in benign melanocytic naevi. Expressed in the stroma close to skin tumors, in the tumor cells themselves and in the epidermis of psoriasis.

Its subcellular location is the secreted. Its function is as follows. May be an activator of G protein signaling. The sequence is that of Fibronectin type III domain-containing protein 1 (FNDC1) from Homo sapiens (Human).